The following is a 247-amino-acid chain: Probable transcriptional regulatory protein LAF_0541 (247 aa).

The tract at residues 1 to 22 (MSGHSKWHNIQGRKNAQDAKRG) is disordered.

The protein belongs to the TACO1 family.

It localises to the cytoplasm. The protein is Probable transcriptional regulatory protein LAF_0541 of Limosilactobacillus fermentum (strain NBRC 3956 / LMG 18251) (Lactobacillus fermentum).